The sequence spans 120 residues: Large ribosomal subunit protein uL14 (120 aa).

This sequence belongs to the universal ribosomal protein uL14 family. Part of the 50S ribosomal subunit. Forms a cluster with proteins L3 and L19. In the 70S ribosome, L14 and L19 interact and together make contacts with the 16S rRNA in bridges B5 and B8.

Its function is as follows. Binds to 23S rRNA. Forms part of two intersubunit bridges in the 70S ribosome. The protein is Large ribosomal subunit protein uL14 of Aster yellows witches'-broom phytoplasma (strain AYWB).